The sequence spans 478 residues: MDHSLGWQGNSVPEDGTEAGIKHFLEDSSDDAELSKFVKDFPGSEPYHSAESKTRVARPQILEPRPQSPDLCDDDVEFRGSLWPQPSDSQQYFSAPAPLSPSSRPRSPWGKLDPYDSSEDDKEYVGFATLPNQVHRKSVKKGFDFTLMVAGESGLGKSTLVNSLFLTDLYRDRKLLGAEERIMQTVEITKHAVDIEEKGVRLRLTIVDTPGFGDAVNNTECWKPVAEYIDQQFEQYFRDESGLNRKNIQDNRVHCCLYFISPFGHGLRPLDVEFMKALHQRVNIVPILAKADTLTPPEVDRKKCKIREEIEHFGIKIYQFPDCDSDEDEDFKLQDQALKESIPFAVIGSNTVVEARGRRVRGRLYPWGIVEVENPGHCDFVKLRTMLVRTHMQDLKDVTRETHYENYRAQCIQSMTRLVVKERNRNKLTRESGTDFPIPAVPPGTDPETEKLIREKDEELRRMQEMLHKIQRQMKETH.

Residues 1–115 are disordered; sequence MDHSLGWQGN…RSPWGKLDPY (115 aa). Serine 28, serine 29, and serine 68 each carry phosphoserine. The segment covering 84–93 has biased composition (polar residues); it reads PQPSDSQQYF. Residues 94–108 show a composition bias toward low complexity; the sequence is SAPAPLSPSSRPRSP. Residues serine 117 and serine 118 each carry the phosphoserine modification. The Septin-type G domain occupies 141–414; sequence KGFDFTLMVA…ENYRAQCIQS (274 aa). The segment at 151–158 is G1 motif; the sequence is GESGLGKS. GTP-binding positions include 151–158 and threonine 185; that span reads GESGLGKS. A G3 motif region spans residues 208 to 211; it reads DTPG. Residues 289 to 292 form a G4 motif region; it reads AKAD. 290 to 298 serves as a coordination point for GTP; that stretch reads KADTLTPPE. The residue at position 325 (serine 325) is a Phosphoserine. 2 residues coordinate GTP: glycine 348 and arginine 363. Residues 428–449 form a disordered region; that stretch reads LTRESGTDFPIPAVPPGTDPET. Residue serine 432 is modified to Phosphoserine. Residue threonine 434 is modified to Phosphothreonine. A coiled-coil region spans residues 447–478; it reads PETEKLIREKDEELRRMQEMLHKIQRQMKETH.

This sequence belongs to the TRAFAC class TrmE-Era-EngA-EngB-Septin-like GTPase superfamily. Septin GTPase family. In terms of assembly, septins polymerize into heterooligomeric protein complexes that form filaments, and can associate with cellular membranes, actin filaments and microtubules. GTPase activity is required for filament formation. Interacts with SEPTIN8. Component of a septin core octameric complex consisting of SEPTIN12, SEPTIN7, SEPTIN6 and SEPTIN2 or SEPTIN4 in the order 12-7-6-2-2-6-7-12 or 12-7-6-4-4-6-7-12. Interacts with SEPTIN14 (via C-terminus). Interacts with DYRK1A. Interacts with SLC6A3/DAT and SNCA/alpha-synuclein. Interacts with STX1A; in the striatum. Interacts with XIAP (via BIR3 domain) following the induction of apoptosis. Interacts with AREL1 (via HECT domain); in the cytoplasm following induction of apoptosis. Interacts with DPYSL5. In terms of processing, phosphorylated by DYRK1A. Post-translationally, ubiquitinated by AREL1. May be phosphorylated. In terms of tissue distribution, expressed in the cerebral cortex, striatum, midbrain, cerebellum and spinal cord (at protein level). Expressed in the substantia nigra pars compacta, ventral tegmental area, projection fiber bundles and in axon terminals surrounding striatal neurons (at protein level). Expressed in hair follicle stem cells (at protein level). Expressed in small intestinal crypts; abundantly expressed at the crypt base (at protein level). Widely expressed in the brain and to a lesser extent in the testis, lung and liver. Highly expressed in the brain and testis and, to a lesser extent in the heart, lung and kidney. In the brain, abundant in areas of high cell density, particularly in the stria terminalis. Expressed in the entorhinal, temporal and visual cortices and the hippocampus of the brain where is colocalizes with DYRK1A in postnatal day 1 and adult mice. Expressed and extensively colocalizes with DYRK1A in apical dendrites of pyramidal cells. As to expression, predominantly expressed in embryonic brain and dorsal root ganglion neurons. In terms of tissue distribution, expressed in LGR5-positive intestinal stem cells and lysozyme-positive Paneth cells (at protein level). Expressed in the brain and testis.

It localises to the cytoplasm. The protein localises to the cell projection. The protein resides in the cilium. Its subcellular location is the flagellum. It is found in the cytoplasmic vesicle. It localises to the secretory vesicle. The protein localises to the axon. The protein resides in the dendrite. Its subcellular location is the perikaryon. It is found in the synapse. It localises to the mitochondrion. The protein localises to the cytosol. Functionally, filament-forming cytoskeletal GTPase. Pro-apoptotic protein involved in LGR5-positive intestinal stem cell and Paneth cell expansion in the intestines, via its interaction with XIAP. May also play a role in the regulation of cell fate in the intestine. Positive regulator of apoptosis involved in hematopoietic stem cell homeostasis; via its interaction with XIAP. Negative regulator of repair and hair follicle regeneration in response to injury, due to inhibition of hair follicle stem cell proliferation, potentially via its interaction with XIAP. Plays an important role in male fertility and sperm motility. During spermiogenesis, essential for the establishment of the annulus (a fibrous ring structure connecting the midpiece and the principal piece of the sperm flagellum) which is a requisite for the structural and mechanical integrity of the sperm. Involved in the migration of cortical neurons and the formation of neuron leading processes during embryonic development. Required for dopaminergic metabolism in presynaptic autoreceptors; potentially via activity as a presynaptic scaffold protein. In Mus musculus (Mouse), this protein is Septin-4.